The primary structure comprises 126 residues: Holo-[acyl-carrier-protein] synthase (126 aa).

2 residues coordinate Mg(2+): Asp-8 and Glu-57.

Belongs to the P-Pant transferase superfamily. AcpS family. The cofactor is Mg(2+).

It is found in the cytoplasm. The enzyme catalyses apo-[ACP] + CoA = holo-[ACP] + adenosine 3',5'-bisphosphate + H(+). In terms of biological role, transfers the 4'-phosphopantetheine moiety from coenzyme A to a Ser of acyl-carrier-protein. The chain is Holo-[acyl-carrier-protein] synthase from Geobacter metallireducens (strain ATCC 53774 / DSM 7210 / GS-15).